Here is a 134-residue protein sequence, read N- to C-terminus: 16 kDa beta-galactoside-binding lectin (134 aa).

Methionine 1 bears the N-acetylmethionine mark. A Galectin domain is found at 4 to 134; the sequence is GLVVTQLDVQ…DFKVKAIKFS (131 aa). 69-75 provides a ligand contact to a beta-D-galactoside; the sequence is WGEEDRK.

In terms of assembly, homodimer. As to expression, mainly in the liver (adult), mainly in the muscle (embryo).

Its function is as follows. This protein binds beta-galactoside. Its physiological function is not yet known. It may be involved in the regulation of differentiation. In Gallus gallus (Chicken), this protein is 16 kDa beta-galactoside-binding lectin.